The following is a 165-amino-acid chain: Lipoprotein signal peptidase (165 aa).

Helical transmembrane passes span 12–32, 70–90, and 102–122; these read WLWL…LILQ, WFFA…MYRA, and ALII…GFVV. Residues Asp123 and Asp141 contribute to the active site. The helical transmembrane segment at 137–157 threads the bilayer; it reads FNLADTAICIGAALVVLEGFL.

Belongs to the peptidase A8 family.

It localises to the cell inner membrane. The enzyme catalyses Release of signal peptides from bacterial membrane prolipoproteins. Hydrolyzes -Xaa-Yaa-Zaa-|-(S,diacylglyceryl)Cys-, in which Xaa is hydrophobic (preferably Leu), and Yaa (Ala or Ser) and Zaa (Gly or Ala) have small, neutral side chains.. It functions in the pathway protein modification; lipoprotein biosynthesis (signal peptide cleavage). This protein specifically catalyzes the removal of signal peptides from prolipoproteins. The protein is Lipoprotein signal peptidase of Cronobacter sakazakii (strain ATCC BAA-894) (Enterobacter sakazakii).